A 537-amino-acid chain; its full sequence is Probable alpha-galactosidase A (537 aa).

The first 23 residues, 1-23, serve as a signal peptide directing secretion; sequence MNQGTKSILLAATLAAIPWQVYG. The cysteines at positions 46 and 78 are disulfide-linked. N-linked (GlcNAc...) asparagine glycans are attached at residues Asn-49, Asn-87, Asn-93, and Asn-123. Cys-126 and Cys-156 are disulfide-bonded. The active-site Nucleophile is Asp-154. Asn-203 carries an N-linked (GlcNAc...) asparagine glycan. Asp-212 serves as the catalytic Proton donor. 2 N-linked (GlcNAc...) asparagine glycosylation sites follow: Asn-355 and Asn-436. The 125-residue stretch at 413–537 folds into the Ricin B-type lectin domain; that stretch reads CSSVVPTGLV…FGLPSGVQLS (125 aa). 2 cysteine pairs are disulfide-bonded: Cys-430/Cys-444 and Cys-469/Cys-482. Asn-491 is a glycosylation site (N-linked (GlcNAc...) asparagine).

This sequence belongs to the glycosyl hydrolase 27 family.

It is found in the secreted. It catalyses the reaction Hydrolysis of terminal, non-reducing alpha-D-galactose residues in alpha-D-galactosides, including galactose oligosaccharides, galactomannans and galactolipids.. In terms of biological role, hydrolyzes a variety of simple alpha-D-galactoside as well as more complex molecules such as oligosaccharides and polysaccharides. The protein is Probable alpha-galactosidase A (aglA) of Aspergillus niger (strain ATCC MYA-4892 / CBS 513.88 / FGSC A1513).